Reading from the N-terminus, the 235-residue chain is UPF0702 transmembrane protein YdfS (235 aa).

Helical transmembrane passes span 32-52 (MTIFDFIAAITLGAIAAGLAY) and 60-80 (NMAISFSIFVLTIFLISFLSI).

It belongs to the UPF0702 family.

It localises to the cell membrane. The sequence is that of UPF0702 transmembrane protein YdfS (ydfS) from Bacillus subtilis (strain 168).